The following is a 90-amino-acid chain: Acylphosphatase (90 aa).

The Acylphosphatase-like domain maps to 5–90; that stretch reads CLKAWVTGRV…DPPPGTFELG (86 aa). Catalysis depends on residues arginine 20 and asparagine 38.

The protein belongs to the acylphosphatase family.

The catalysed reaction is an acyl phosphate + H2O = a carboxylate + phosphate + H(+). This is Acylphosphatase (acyP) from Chromohalobacter salexigens (strain ATCC BAA-138 / DSM 3043 / CIP 106854 / NCIMB 13768 / 1H11).